Here is a 397-residue protein sequence, read N- to C-terminus: Ubiquitin-like modifier-activating enzyme 5 (397 aa).

ATP contacts are provided by Gly77, Asp98, Lys121, Asn144, and Asn178. Positions 220 and 223 each coordinate Zn(2+). The Glycyl thioester intermediate role is filled by Cys244. 2 residues coordinate Zn(2+): Cys297 and Cys302.

The protein belongs to the ubiquitin-activating E1 family. UBA5 subfamily.

E1-like enzyme which activates UFM1. This chain is Ubiquitin-like modifier-activating enzyme 5, found in Culex quinquefasciatus (Southern house mosquito).